Consider the following 400-residue polypeptide: S-adenosylmethionine sensor upstream of mTORC1 (400 aa).

S-adenosyl-L-methionine-binding residues include Arg-99, Gly-168, Asp-186, Asp-198, Phe-199, and Ser-240.

It belongs to the BMT2/SAMTOR family. Interacts with the GATOR1 complex; interaction is disrupted when samtor binds S-adenosyl-L-methionine. Interacts with the KICSTOR complex; interaction is disrupted when samtor binds S-adenosyl-L-methionine.

Its function is as follows. S-adenosyl-L-methionine-binding protein that acts as an inhibitor of mTORC1 signaling via interaction with the GATOR1 and KICSTOR complexes. Acts as a sensor of S-adenosyl-L-methionine to signal methionine sufficiency to mTORC1: in presence of methionine, binds S-adenosyl-L-methionine, leading to disrupt interaction with the GATOR1 and KICSTOR complexes and promote mTORC1 signaling. Upon methionine starvation, S-adenosyl-L-methionine levels are reduced, thereby promoting the association with GATOR1 and KICSTOR, leading to inhibit mTORC1 signaling. Probably also acts as a S-adenosyl-L-methionine-dependent methyltransferase. In Xenopus laevis (African clawed frog), this protein is S-adenosylmethionine sensor upstream of mTORC1.